The chain runs to 466 residues: Tryptophan synthase beta chain 2, chloroplastic (466 aa).

K161 is modified (N6-(pyridoxal phosphate)lysine).

This sequence belongs to the TrpB family. As to quaternary structure, tetramer of two alpha and two beta chains. Pyridoxal 5'-phosphate is required as a cofactor.

Its subcellular location is the plastid. The protein localises to the chloroplast. The catalysed reaction is (1S,2R)-1-C-(indol-3-yl)glycerol 3-phosphate + L-serine = D-glyceraldehyde 3-phosphate + L-tryptophan + H2O. Its pathway is amino-acid biosynthesis; L-tryptophan biosynthesis; L-tryptophan from chorismate: step 5/5. In terms of biological role, the beta subunit is responsible for the synthesis of L-tryptophan from indole and L-serine. This Camptotheca acuminata (Happy tree) protein is Tryptophan synthase beta chain 2, chloroplastic (TSB).